The chain runs to 211 residues: Envelope protein UL45 homolog (211 aa).

Residues 1-46 (MMSPTPEDDRDLVVVRGRLRMMDNGAEHDRERRSYTAWPHLCCGCT) lie on the Intravirion side of the membrane. A helical; Signal-anchor for type II membrane protein membrane pass occupies residues 47-67 (IGIILTMFVIATTLLLASLFA). Topologically, residues 68–211 (FSYMSLESGT…SSILSNAIMK (144 aa)) are virion surface. N-linked (GlcNAc...) asparagine; by host glycosylation is found at Asn96 and Asn133.

Belongs to the herpesviridae HHV-1 UL45 family.

It is found in the virion membrane. The chain is Envelope protein UL45 homolog (UL45H) from Gallid herpesvirus 2 (strain Chicken/Md5/ATCC VR-987) (GaHV-2).